The sequence spans 130 residues: Secreted RxLR effector protein 66 (130 aa).

The first 21 residues, 1 to 21 (MHLRLLMSTVITATLIVSNNA), serve as a signal peptide directing secretion. The RxLR-dEER signature appears at 32-62 (RALRGASTVGIAADNLLAAHFSPTLKHKESR). A helical transmembrane segment spans residues 104 to 124 (GPAIAIFAGVAATFILIDYLI).

The protein belongs to the RxLR effector family.

The protein localises to the secreted. The protein resides in the host cytoplasm. Its subcellular location is the host nucleus. It is found in the membrane. Effector that acts as a broad suppressor of cell death to interrupt plant immunity. Inhibits cell death induced by cell death-inducing proteins, including the PAMP elicitor INF1 from P.infestans. This is Secreted RxLR effector protein 66 from Plasmopara viticola (Downy mildew of grapevine).